A 122-amino-acid polypeptide reads, in one-letter code: MANHEQIIEAIKEMSVLELNDLVKAIEEEFGVTAAAPVAVAGAAGGADAAAEKTEFDVELTSAGSSKIKVVKAVKEATGLGLKDAKELVDGAPKVIKEALPKEEAEKLKEQLEEVGATVEIK.

It belongs to the bacterial ribosomal protein bL12 family. As to quaternary structure, homodimer. Part of the ribosomal stalk of the 50S ribosomal subunit. Forms a multimeric L10(L12)X complex, where L10 forms an elongated spine to which 2 to 4 L12 dimers bind in a sequential fashion. Binds GTP-bound translation factors.

In terms of biological role, forms part of the ribosomal stalk which helps the ribosome interact with GTP-bound translation factors. Is thus essential for accurate translation. The protein is Large ribosomal subunit protein bL12 of Staphylococcus aureus (strain Newman).